The sequence spans 388 residues: Arginine biosynthesis bifunctional protein ArgJ 2 (388 aa).

Positions 145, 167, 178, 257, and 381 each coordinate substrate. Thr-178 (nucleophile) is an active-site residue.

Belongs to the ArgJ family. Heterotetramer of two alpha and two beta chains.

It localises to the cytoplasm. The catalysed reaction is N(2)-acetyl-L-ornithine + L-glutamate = N-acetyl-L-glutamate + L-ornithine. It carries out the reaction L-glutamate + acetyl-CoA = N-acetyl-L-glutamate + CoA + H(+). It participates in amino-acid biosynthesis; L-arginine biosynthesis; L-ornithine and N-acetyl-L-glutamate from L-glutamate and N(2)-acetyl-L-ornithine (cyclic): step 1/1. The protein operates within amino-acid biosynthesis; L-arginine biosynthesis; N(2)-acetyl-L-ornithine from L-glutamate: step 1/4. Functionally, catalyzes two activities which are involved in the cyclic version of arginine biosynthesis: the synthesis of N-acetylglutamate from glutamate and acetyl-CoA as the acetyl donor, and of ornithine by transacetylation between N(2)-acetylornithine and glutamate. The protein is Arginine biosynthesis bifunctional protein ArgJ 2 of Clostridium acetobutylicum (strain ATCC 824 / DSM 792 / JCM 1419 / IAM 19013 / LMG 5710 / NBRC 13948 / NRRL B-527 / VKM B-1787 / 2291 / W).